Here is a 312-residue protein sequence, read N- to C-terminus: Cytochrome c biogenesis protein CcsA (312 aa).

The next 8 membrane-spanning stretches (helical) occupy residues Ile-9–Phe-29, Gly-44–Gly-64, Leu-71–Phe-91, Gly-111–Leu-131, Met-143–Ile-163, Val-216–Asn-236, Trp-251–Leu-271, and Ala-277–Leu-297.

This sequence belongs to the CcmF/CycK/Ccl1/NrfE/CcsA family. As to quaternary structure, may interact with Ccs1.

It localises to the plastid. The protein localises to the chloroplast thylakoid membrane. Required during biogenesis of c-type cytochromes (cytochrome c6 and cytochrome f) at the step of heme attachment. The polypeptide is Cytochrome c biogenesis protein CcsA (Atropa belladonna (Belladonna)).